We begin with the raw amino-acid sequence, 145 residues long: D-aminoacyl-tRNA deacylase (145 aa).

The Gly-cisPro motif, important for rejection of L-amino acids motif lies at 137–138 (GP).

Belongs to the DTD family. In terms of assembly, homodimer.

The protein resides in the cytoplasm. The enzyme catalyses glycyl-tRNA(Ala) + H2O = tRNA(Ala) + glycine + H(+). It catalyses the reaction a D-aminoacyl-tRNA + H2O = a tRNA + a D-alpha-amino acid + H(+). In terms of biological role, an aminoacyl-tRNA editing enzyme that deacylates mischarged D-aminoacyl-tRNAs. Also deacylates mischarged glycyl-tRNA(Ala), protecting cells against glycine mischarging by AlaRS. Acts via tRNA-based rather than protein-based catalysis; rejects L-amino acids rather than detecting D-amino acids in the active site. By recycling D-aminoacyl-tRNA to D-amino acids and free tRNA molecules, this enzyme counteracts the toxicity associated with the formation of D-aminoacyl-tRNA entities in vivo and helps enforce protein L-homochirality. This is D-aminoacyl-tRNA deacylase from Serratia proteamaculans (strain 568).